Reading from the N-terminus, the 289-residue chain is Shikimate dehydrogenase (NADP(+)) (289 aa).

Residues Ser-22–Ser-24 and Thr-69 each bind shikimate. Lys-73 functions as the Proton acceptor in the catalytic mechanism. Glu-85 contributes to the NADP(+) binding site. The shikimate site is built by Asn-94 and Asp-109. NADP(+) is bound by residues Gly-134–Ala-138, Asn-158–Arg-163, and Ile-226. Tyr-228 contacts shikimate. Gly-249 is an NADP(+) binding site.

Belongs to the shikimate dehydrogenase family. Homodimer.

The catalysed reaction is shikimate + NADP(+) = 3-dehydroshikimate + NADPH + H(+). The protein operates within metabolic intermediate biosynthesis; chorismate biosynthesis; chorismate from D-erythrose 4-phosphate and phosphoenolpyruvate: step 4/7. Involved in the biosynthesis of the chorismate, which leads to the biosynthesis of aromatic amino acids. Catalyzes the reversible NADPH linked reduction of 3-dehydroshikimate (DHSA) to yield shikimate (SA). The protein is Shikimate dehydrogenase (NADP(+)) of Brucella melitensis biotype 2 (strain ATCC 23457).